The primary structure comprises 370 residues: Popeye domain-containing 2 (370 aa).

A run of 2 helical transmembrane segments spans residues 51-71 (ALYI…WGWL) and 78-98 (VFIW…HLIF). The tract at residues 275–349 (PSPPGSEGGS…SGEDSTSLIL (75 aa)) is disordered. Residues 283–294 (GSASSPPRGSLG) are compositionally biased toward low complexity. Composition is skewed to polar residues over residues 307–319 (NPGS…QPDQ) and 330–347 (QHWS…STSL).

Belongs to the popeye family. Expressed in the heart and, slightly, in skeletal muscle.

It localises to the membrane. The protein localises to the cell membrane. Its subcellular location is the sarcolemma. Important for striated muscle differentiation and cardiac morphogenesis. Is also required for cardiac conduction system development, plays a regulatory function in heart rate dynamics mediated, at least in part, through cAMP-binding. In Danio rerio (Zebrafish), this protein is Popeye domain-containing 2.